The primary structure comprises 590 residues: Acyl-CoA ligase sidI (590 aa).

Residues R6–L14 carry the PTS2-type peroxisomal targeting signal motif. ATP contacts are provided by residues T220 to K228, S359 to T364, D449, and R464. Residue T364 participates in substrate binding. CoA-binding positions include G472–E474 and Y543–F545. An ATP-binding site is contributed by K563.

Belongs to the ATP-dependent AMP-binding enzyme family.

It localises to the peroxisome. It participates in siderophore biosynthesis. Acyl-CoA ligase; part of the siderophore biosynthetic pathway. Aspergillus fumigatus produces 4 types of siderophores, low-molecular-mass iron chelators, including excreted fusarinine C (FsC) and triacetylfusarinine C (TAFC) for iron uptake and intacellular ferricrocin (FC) for hyphal and hydroxyferricrocin (HFC) for conidial iron distribution and storage. TAFC consists of 3 N(2)-acetyl-N(5)-anhydromevalonyl-N(5)-hydroxyornithine residues cyclically linked by ester bonds; FC is a cyclic hexapeptide with the structure Gly-Ser-Gly-(N(5)-acetyl-N(5)-hydroxyornithine)x3. The biosynthesis of all four siderophores depends on the hydroxylation of ornithine, catalyzed by the monooxygenase sidA. Subsequently, the pathways for biosynthesis of extra- and intracellular siderophores split. For biosynthesis of extracellular siderophores, the transacylase sidF transfers anhydromevalonyl to N(5)-hydroxyornithine. The required anhydromevalonyl-CoA moiety is derived from mevalonate by CoA ligation and dehydration catalyzed by sidI and sidH respectively. The acetylation of N(5)-hydroxyornithine for FC biosynthesis involves the constitutively expressed sidL. FC is hydroxylated to HFC by an as yet uncharacterized enzyme during conidiation. Assembly of fusarinine C (FsC) and FC is catalyzed by two different nonribosomal peptide synthetases (NRPS), sidD and sidC respectively. Subsequently, sidG catalyzes N2-acetylation of FsC for forming TAFC. Both extra- and intracellular siderophores are crucial for growth during iron limitation and virulence. The chain is Acyl-CoA ligase sidI from Aspergillus fumigatus (strain ATCC MYA-4609 / CBS 101355 / FGSC A1100 / Af293) (Neosartorya fumigata).